A 5263-amino-acid chain; its full sequence is Fibroin heavy chain (5263 aa).

The first 21 residues, M1–A21, serve as a signal peptide directing secretion. The tract at residues A149 to V5206 is highly repetitive. Residues C5260 and C5263 are joined by a disulfide bond.

As to quaternary structure, silk fibroin elementary unit consists in a disulfide-linked heavy and light chain and a p25 glycoprotein in molar ratios of 6:6:1. This results in a complex of approximately 2.3 MDa. In terms of processing, the interchain disulfide bridge is essential for the intracellular transport and secretion of fibroin. In terms of tissue distribution, produced exclusively in the posterior (PSG) section of silk glands, which are essentially modified salivary glands.

Functionally, core component of the silk filament; a strong, insoluble and chemically inert fiber. This chain is Fibroin heavy chain (FIBH), found in Bombyx mori (Silk moth).